The following is a 311-amino-acid chain: Giardin subunit gamma (311 aa).

A coiled-coil region spans residues 185–233 (GLQTEINSLEAIIEREFAQAANRLNQEVSNFKESFDASERNIKLQKKHV).

As to quaternary structure, interacts with EB1.

The protein localises to the cytoplasm. It localises to the cytoskeleton. Functionally, giardins are involved in parasite attachment to the intestinal mucosa and in the cytoskeletal disassembly and reassembly that marks the transition from infectious trophozoite to transmissible cyst. They may interact with other cytoskeletal proteins such as microtubules in the microribbons or crossbridges, to maintain the integrity of the ventral disk. Involved in formation of the ventral disk. The chain is Giardin subunit gamma from Giardia intestinalis (Giardia lamblia).